Reading from the N-terminus, the 346-residue chain is NADH-ubiquinone oxidoreductase chain 2 (346 aa).

11 consecutive transmembrane segments (helical) span residues 1 to 21 (MNPH…TITI), 25 to 45 (HWVL…PLIS), 60 to 80 (FLTQ…NAWA), 95 to 115 (CLLL…HFWF), 124 to 144 (LMTA…LLLM), 149 to 169 (LNPA…GWMG), 178 to 195 (ILAF…IILV), 200 to 219 (LALL…FMAL), 242 to 262 (ATLM…GFMP), 274 to 294 (EMTP…FFYL), and 326 to 346 (AILA…HAIV).

Belongs to the complex I subunit 2 family.

Its subcellular location is the mitochondrion inner membrane. The enzyme catalyses a ubiquinone + NADH + 5 H(+)(in) = a ubiquinol + NAD(+) + 4 H(+)(out). Its function is as follows. Core subunit of the mitochondrial membrane respiratory chain NADH dehydrogenase (Complex I) that is believed to belong to the minimal assembly required for catalysis. Complex I functions in the transfer of electrons from NADH to the respiratory chain. The immediate electron acceptor for the enzyme is believed to be ubiquinone. The chain is NADH-ubiquinone oxidoreductase chain 2 (MT-ND2) from Mareca americana (American wigeon).